The sequence spans 291 residues: Glucose and ribitol dehydrogenase (291 aa).

The tract at residues Met-1 to Pro-35 is disordered. Residue Leu-45 to Ala-69 coordinates NAD(+). Position 183 (Ser-183) interacts with substrate. Residue Tyr-196 is the Proton acceptor of the active site.

The protein belongs to the short-chain dehydrogenases/reductases (SDR) family. Expressed in embryogenic cells, somatic embryos and seeds in the later stages of development, but not in non-embryogenic cells and mature leaves.

Its function is as follows. May act as a short alcohol-polyol-sugar dehydrogenase possibly related to carbohydrate metabolism and the acquisition of desiccation tolerance. May also be involved in signal transduction. This chain is Glucose and ribitol dehydrogenase (CAISE5), found in Daucus carota (Wild carrot).